Reading from the N-terminus, the 166-residue chain is Endoribonuclease YbeY (166 aa).

Residues His-126, His-130, and His-136 each contribute to the Zn(2+) site.

It belongs to the endoribonuclease YbeY family. Zn(2+) is required as a cofactor.

It localises to the cytoplasm. Functionally, single strand-specific metallo-endoribonuclease involved in late-stage 70S ribosome quality control and in maturation of the 3' terminus of the 16S rRNA. The polypeptide is Endoribonuclease YbeY (Laribacter hongkongensis (strain HLHK9)).